A 279-amino-acid chain; its full sequence is Movement protein (279 aa).

Residues 246-279 (SESEELNVESPPAAIGSSSASRSEAFRPQVVNGL) are disordered. Low complexity predominate over residues 254 to 268 (ESPPAAIGSSSASRS).

Belongs to the cucumovirus movement protein family.

It is found in the host cell junction. The protein resides in the host plasmodesma. Transports viral genome to neighboring plant cells directly through plasmosdesmata, without any budding. The movement protein allows efficient cell to cell propagation, by bypassing the host cell wall barrier. Acts by forming a tubular structure at the host plasmodesmata, enlarging it enough to allow free passage of virion capsids. The protein is Movement protein of Cucumber mosaic virus (strain N) (CMV).